The following is a 497-amino-acid chain: Inactive metallocarboxypeptidase ecm14 (497 aa).

A signal peptide spans 1–28 (MAYNKSLKSLVFILLASQIVFVLFLCYG). Positions 29–148 (KSSRELGVKW…TLFESIVPDT (120 aa)) are excised as a propeptide. The 311-residue stretch at 182 to 492 (SYQNLESINS…AMILYYGEFI (311 aa)) folds into the Peptidase M14 domain. Residues H248 and E251 each coordinate Zn(2+). Substrate-binding positions include 248-251 (HARE) and 323-324 (DA). C317 and C337 are disulfide-bonded. Zn(2+) is bound at residue H377. 378–379 (SY) provides a ligand contact to substrate.

Belongs to the peptidase M14 family. Requires Zn(2+) as cofactor.

The protein resides in the endoplasmic reticulum. The protein localises to the secreted. In terms of biological role, inactive carboxypeptidase that may play a role in cell wall organization and biogenesis. In Schizosaccharomyces pombe (strain 972 / ATCC 24843) (Fission yeast), this protein is Inactive metallocarboxypeptidase ecm14.